Reading from the N-terminus, the 364-residue chain is DNA replication and repair protein RecF (364 aa).

G30–T37 lines the ATP pocket.

It belongs to the RecF family.

Its subcellular location is the cytoplasm. Functionally, the RecF protein is involved in DNA metabolism; it is required for DNA replication and normal SOS inducibility. RecF binds preferentially to single-stranded, linear DNA. It also seems to bind ATP. This chain is DNA replication and repair protein RecF, found in Clostridium botulinum (strain Loch Maree / Type A3).